The following is a 333-amino-acid chain: MIDSSLPLTDIHRHLDGNIRAQTILDLGREFNIALPASTLDTLRPHVQVTSLEPDLVSFLAKLDWGVKVLASLEACRRVAYENVEDAARNGLHYVELRFSPRYMAMTHQLPVDGVVEAVIAGVREGSRDFQVDARLIGILSRTFGEAACQEELAALLAHREGITALDLAGDELGFPGALFLNHFNQARDAGWHITVHAGEAAGPESIWQAIRELGAERIGHGVKAVEDPALMDYLAEHQIGIESCLTSNVQTSTVASLAQHPLKQFLEHGVLASLNTDDPAVQGVDIIHEYTVAAPAAGLSREQIRQAQINGLTQAFLSEQEKAALIQRVAKG.

2 residues coordinate Zn(2+): H12 and H14. The substrate site is built by H14, D16, and G170. H197 provides a ligand contact to Zn(2+). The active-site Proton donor is E200. Zn(2+) is bound at residue D278. D279 is a binding site for substrate.

It belongs to the metallo-dependent hydrolases superfamily. Adenosine and AMP deaminases family. Adenosine deaminase subfamily. Requires Zn(2+) as cofactor.

The catalysed reaction is adenosine + H2O + H(+) = inosine + NH4(+). It carries out the reaction 2'-deoxyadenosine + H2O + H(+) = 2'-deoxyinosine + NH4(+). Its function is as follows. Catalyzes the hydrolytic deamination of adenosine and 2-deoxyadenosine. This is Adenosine deaminase from Klebsiella pneumoniae (strain 342).